A 963-amino-acid chain; its full sequence is MSDDKRAKPEKSKYPVNLLDTTFPMRGDLPKREPQWVKQWQDKQLYKKIRAARKGAKKFVLHDGPPYANGDIHIGHAVNKVLKDMIVKARGLSGLDAVYVPGWDCHGMPIEIQIEKQFGKGLPVQEVQAKARAYATEQIKRQMVDFERLGVLGDWGHPYLTMNYSNEADELRALGKIMEKGYVFRGLKPVNWCFDCGSALAEAEVEYKDKVDLSIDVGFPFAETDKLAHAFKLSIEQLNAKPGWIVIWTTTPWTIPSNQALNVHPEVEYALVDTPRGYLILATERVEEQLKIYELEGKVVATTTGAALSEIRFHHPLAKMDTGYDRLSPIYLGDYVTTDTGSGIVHSAPAYGVEDFQSCKAHGMSDHDIISPVMGNGVYAGTLPLFGGLSIWDANPKIVEVLKASGNLFNSHKYTHSYMHCWRHKTPIIYRATSQWFAGMDVDPVEQDGKAVPTLRETALAGIEATEFYPSWGKQRLHNMIANRPDWTLSRQRQWGVPMAFFVHKETGALHPRTAELLEEVARRVEQHGIEAWQTLDPKDLLGDEADQYEKNRDTLDVWFDSGTTHWTVIRGSHRDDLYDPSADEADGRLADLYLEGSDQHRGWFHSSLLTASMLYGKPPYKALLTHGFTVDGEGRKMSKSVGNTVSPQDIANKMGAEIIRLWVASTDYSGELSISDEILKRVVESYRRIRNTLRFLLSNLSDYDHSKHALPASEWLEIDRYAVALTERLQKEVLSHYDSYEFHPVVAKLQTFCSEDLGGFYLDVLKDRLYTTAADSKARRAAQNALYHITQAMLHWMAPFLSFTAEEAWQVFAHGTGHTDTIFTSTYYTLPEVDQADDLLQKWHSLREVRAEVTKQLEAVRVEGAIGSSLQAEVNIQAGGPVLAALQSLEDDLRFVLLTSAATVTPAPEAGDLLVTVTASTHAKCERCWHYRADVGQNPDHPTLCGRCDSNLFGAGEHRSHA.

The 'HIGH' region signature appears at 66 to 76 (PYANGDIHIGH). E596 is an L-isoleucyl-5'-AMP binding site. The 'KMSKS' region motif lies at 637–641 (KMSKS). K640 lines the ATP pocket. Zn(2+)-binding residues include C926, C929, C946, and C949.

This sequence belongs to the class-I aminoacyl-tRNA synthetase family. IleS type 1 subfamily. Monomer. It depends on Zn(2+) as a cofactor.

The protein localises to the cytoplasm. It catalyses the reaction tRNA(Ile) + L-isoleucine + ATP = L-isoleucyl-tRNA(Ile) + AMP + diphosphate. Functionally, catalyzes the attachment of isoleucine to tRNA(Ile). As IleRS can inadvertently accommodate and process structurally similar amino acids such as valine, to avoid such errors it has two additional distinct tRNA(Ile)-dependent editing activities. One activity is designated as 'pretransfer' editing and involves the hydrolysis of activated Val-AMP. The other activity is designated 'posttransfer' editing and involves deacylation of mischarged Val-tRNA(Ile). This chain is Isoleucine--tRNA ligase, found in Cupriavidus pinatubonensis (strain JMP 134 / LMG 1197) (Cupriavidus necator (strain JMP 134)).